We begin with the raw amino-acid sequence, 190 residues long: Putative 3-methyladenine DNA glycosylase (190 aa).

The protein belongs to the DNA glycosylase MPG family.

The polypeptide is Putative 3-methyladenine DNA glycosylase (Rubrobacter xylanophilus (strain DSM 9941 / JCM 11954 / NBRC 16129 / PRD-1)).